The chain runs to 389 residues: Aromatic-amino-acid aminotransferase 2 (389 aa).

N6-(pyridoxal phosphate)lysine is present on Lys233.

The protein belongs to the class-I pyridoxal-phosphate-dependent aminotransferase family. In terms of assembly, homodimer. It depends on pyridoxal 5'-phosphate as a cofactor.

The catalysed reaction is an aromatic L-alpha-amino acid + 2-oxoglutarate = an aromatic oxo-acid + L-glutamate. Catalyzes the transamination of phenylalanine, tyrosine and tryptophan. Shows virtually no activity towards aspartic acid, alanine, valine or isoleucine. This chain is Aromatic-amino-acid aminotransferase 2, found in Thermococcus litoralis (strain ATCC 51850 / DSM 5473 / JCM 8560 / NS-C).